Reading from the N-terminus, the 453-residue chain is tRNA-2-methylthio-N(6)-dimethylallyladenosine synthase (453 aa).

Positions glycine 7–alanine 123 constitute an MTTase N-terminal domain. 6 residues coordinate [4Fe-4S] cluster: cysteine 16, cysteine 52, cysteine 86, cysteine 158, cysteine 162, and cysteine 165. In terms of domain architecture, Radical SAM core spans arginine 144–alanine 381. The 64-residue stretch at glutamine 384–alanine 447 folds into the TRAM domain.

It belongs to the methylthiotransferase family. MiaB subfamily. Monomer. The cofactor is [4Fe-4S] cluster.

The protein localises to the cytoplasm. The catalysed reaction is N(6)-dimethylallyladenosine(37) in tRNA + (sulfur carrier)-SH + AH2 + 2 S-adenosyl-L-methionine = 2-methylsulfanyl-N(6)-dimethylallyladenosine(37) in tRNA + (sulfur carrier)-H + 5'-deoxyadenosine + L-methionine + A + S-adenosyl-L-homocysteine + 2 H(+). Catalyzes the methylthiolation of N6-(dimethylallyl)adenosine (i(6)A), leading to the formation of 2-methylthio-N6-(dimethylallyl)adenosine (ms(2)i(6)A) at position 37 in tRNAs that read codons beginning with uridine. In Synechococcus sp. (strain RCC307), this protein is tRNA-2-methylthio-N(6)-dimethylallyladenosine synthase.